The sequence spans 143 residues: Large ribosomal subunit protein uL13 (143 aa).

It belongs to the universal ribosomal protein uL13 family. As to quaternary structure, part of the 50S ribosomal subunit.

Functionally, this protein is one of the early assembly proteins of the 50S ribosomal subunit, although it is not seen to bind rRNA by itself. It is important during the early stages of 50S assembly. In Dehalococcoides mccartyi (strain CBDB1), this protein is Large ribosomal subunit protein uL13.